The following is a 449-amino-acid chain: MRRKNGLVFLAILAAMILAFTIVLPTDKGALLGKGILFGLDLKGGLHMVYQADLSNVDESNIDGVMDGVVEVISNRINPLGVTEASIQRQGDDRIVVELPGLDITDEQKARIGRTALLEFGELAADGEDYKWENSLGKWKPATATIDGVEYTLTSAYFKDSTYVNRDQYGNILLVFEWDDIGAQLSKEITTRLLNQQLGIFEGDEALSGDNGIPIAPVINNVIETSGVIEGLSYNEAEMLSNQLNAGRLPVPLEPIYEQTVSPTLGQNFVDLAVKAGLVGIILVMIFMIAFYRLPGLLASIALVFYGVIVLALFKLVPVTLTLAGIGGFIVSAGMAVDANILIFARLKEELLTGKTLGAAVEAGFSRAWSAIWDSNVTTFIACGILFWVGGTIAAGAPVKGFAVTLFLGVAVSMFTAIFVTRTLLRLFVGTKTGKKLALFTTQTRGKNE.

6 helical membrane-spanning segments follow: residues 6-26, 272-292, 294-314, 317-337, 379-399, and 401-421; these read GLVFLAILAAMILAFTIVLPT, LAVKAGLVGIILVMIFMIAFY, LPGLLASIALVFYGVIVLALF, VPVTLTLAGIGGFIVSAGMAV, TFIACGILFWVGGTIAAGAPV, and GFAVTLFLGVAVSMFTAIFVT.

This sequence belongs to the SecD/SecF family. SecD subfamily. In terms of assembly, forms a complex with SecF. Part of the essential Sec protein translocation apparatus which comprises SecA, SecYEG and auxiliary proteins SecDF. Other proteins may also be involved.

It localises to the cell membrane. Its function is as follows. Part of the Sec protein translocase complex. Interacts with the SecYEG preprotein conducting channel. SecDF uses the proton motive force (PMF) to complete protein translocation after the ATP-dependent function of SecA. The sequence is that of Protein translocase subunit SecD from Dehalococcoides mccartyi (strain VS).